A 339-amino-acid chain; its full sequence is Transaldolase (339 aa).

Lysine 135 acts as the Schiff-base intermediate with substrate in catalysis.

It belongs to the transaldolase family. Type 1 subfamily. In terms of assembly, homodimer.

It localises to the cytoplasm. The catalysed reaction is D-sedoheptulose 7-phosphate + D-glyceraldehyde 3-phosphate = D-erythrose 4-phosphate + beta-D-fructose 6-phosphate. Its pathway is carbohydrate degradation; pentose phosphate pathway; D-glyceraldehyde 3-phosphate and beta-D-fructose 6-phosphate from D-ribose 5-phosphate and D-xylulose 5-phosphate (non-oxidative stage): step 2/3. In terms of biological role, transaldolase is important for the balance of metabolites in the pentose-phosphate pathway. The protein is Transaldolase of Prochlorococcus marinus (strain MIT 9211).